A 402-amino-acid chain; its full sequence is CCA-adding enzyme (402 aa).

Positions 32 and 35 each coordinate ATP. CTP contacts are provided by Gly-32 and Arg-35. Residues Asp-45 and Asp-47 each coordinate Mg(2+). The ATP site is built by Arg-116, Asp-159, Arg-162, Arg-165, and Arg-168. Arg-116, Asp-159, Arg-162, Arg-165, and Arg-168 together coordinate CTP.

This sequence belongs to the tRNA nucleotidyltransferase/poly(A) polymerase family. Bacterial CCA-adding enzyme type 3 subfamily. As to quaternary structure, homodimer. Mg(2+) is required as a cofactor.

The enzyme catalyses a tRNA precursor + 2 CTP + ATP = a tRNA with a 3' CCA end + 3 diphosphate. It catalyses the reaction a tRNA with a 3' CCA end + 2 CTP + ATP = a tRNA with a 3' CCACCA end + 3 diphosphate. In terms of biological role, catalyzes the addition and repair of the essential 3'-terminal CCA sequence in tRNAs without using a nucleic acid template. Adds these three nucleotides in the order of C, C, and A to the tRNA nucleotide-73, using CTP and ATP as substrates and producing inorganic pyrophosphate. tRNA 3'-terminal CCA addition is required both for tRNA processing and repair. Also involved in tRNA surveillance by mediating tandem CCA addition to generate a CCACCA at the 3' terminus of unstable tRNAs. While stable tRNAs receive only 3'-terminal CCA, unstable tRNAs are marked with CCACCA and rapidly degraded. This is CCA-adding enzyme from Streptococcus pyogenes serotype M4 (strain MGAS10750).